An 88-amino-acid chain; its full sequence is uncharacterized protein (88 aa).

Positions 1 to 22 (MLKASILFITISLTLMLENSYG) are cleaved as a signal peptide. Intrachain disulfides connect Cys-59-Cys-73, Cys-66-Cys-77, and Cys-72-Cys-82.

The protein localises to the secreted. This is an uncharacterized protein from Schistosoma japonicum (Blood fluke).